The sequence spans 1113 residues: Sterol regulatory element binding protein sbp-1 (1113 aa).

The tract at residues Met-1–Asp-52 is transcriptional activation (acidic). Disordered stretches follow at residues Asp-24–Asp-68, Leu-101–Pro-132, Ser-206–Asn-274, and Glu-290–Thr-345. Over residues Pro-229–Pro-238 the composition is skewed to basic residues. Positions Ala-324–Ser-337 are enriched in acidic residues. Positions Glu-355–Arg-368 are basic motif. A bHLH domain is found at Glu-355–Val-405. The tract at residues Cys-369 to Val-405 is helix-loop-helix motif. Positions Leu-395–Thr-422 form a coiled coil. The disordered stretch occupies residues Thr-437 to Arg-472. 2 helical membrane-spanning segments follow: residues Val-478–Gly-498 and Met-541–Ile-561.

Post-translationally, processed in the Golgi apparatus, releasing the protein from the membrane. Ubiquitinated; the nuclear form has a rapid turnover and is rapidly ubiquitinated and degraded by the proteasome in the nucleus. As to expression, broadly expressed, including many cells in the head. Expressed in the intestine.

It is found in the nucleus. The protein localises to the endoplasmic reticulum membrane. Its function is as follows. Transcription factor involved in maintaining normal fat levels. Regulates the expression of genes involved in lipid metabolism in response to nutrient availability, such as the fatty-acid desaturases fat-5, fat-6 and fat-7. In response to a high-glucose diet, promotes fatty acid synthesis, elongation and desaturation, acting in concert with transcription factor mxl-3. Plays a role in synthesis of monomethyl branched-chain fatty acids (mmBCFAs) as well as other very-long-chain fatty acids. Downstream of the cis-Golgi membrane protein eas-1/GOLT1B and the E3 ubiquitin ligase rnf-145/RNF145, plays a role in the regulation of glial size, perhaps by modulating synthesis of long-chain polyunsaturated fatty-acids (LC-PUFA). Modulates expression of genes in the one-carbon cycle, which produces the methyl donor S-adenosylmethionine (SAM). Probably involved in a feedback loop in which decreased levels of SAM lead to increased transcriptional activity of sbp-1, thereby causing lipid accumulation. Involved in the negative regulation of zinc homeostasis. Involved in the response to simulated microgravity, in concert with Mediator complex subunit mdt-15, probably acting in the intestine. Plays a role in transgenerational lipid accumulation in response to a high-fat diet, probably acting by upregulating wdr-5.1 expression to increase the level of trimethylated 'Lys-4' histone H3 (H3K4me3), which may then induce the expression of fat-5, fat-6 and fat-7. May act as an oxygen sensor for lipid metabolism. In terms of biological role, precursor of the transcription factor form, which is embedded in the endoplasmic reticulum membrane. Processing of this form allows release of the transcription factor form that translocates into the nucleus and activates transcription of genes involved in sterol biosynthesis and lipid homeostasis. Key transcription factor that regulates expression of genes involved in sterol biosynthesis and lipid homeostasis. The polypeptide is Sterol regulatory element binding protein sbp-1 (Caenorhabditis elegans).